The following is a 571-amino-acid chain: UvrABC system protein C (571 aa).

The GIY-YIG domain occupies 15–93 (TSPGVYLWKD…IDRYNPEFNI (79 aa)). In terms of domain architecture, UVR spans 184-219 (NNYINELTNKMHQAANNMQFELALFLRDGLTYLKKL).

The protein belongs to the UvrC family. Interacts with UvrB in an incision complex.

It is found in the cytoplasm. Its function is as follows. The UvrABC repair system catalyzes the recognition and processing of DNA lesions. UvrC both incises the 5' and 3' sides of the lesion. The N-terminal half is responsible for the 3' incision and the C-terminal half is responsible for the 5' incision. In Mycoplasmopsis bovis (strain ATCC 25523 / DSM 22781 / NCTC 10131 / PG45) (Mycoplasma bovis), this protein is UvrABC system protein C.